A 354-amino-acid chain; its full sequence is Uroporphyrinogen decarboxylase (354 aa).

Residues 27–31 (RQAGR), D77, Y154, S209, and H327 contribute to the substrate site.

The protein belongs to the uroporphyrinogen decarboxylase family. As to quaternary structure, homodimer.

It localises to the cytoplasm. The catalysed reaction is uroporphyrinogen III + 4 H(+) = coproporphyrinogen III + 4 CO2. It participates in porphyrin-containing compound metabolism; protoporphyrin-IX biosynthesis; coproporphyrinogen-III from 5-aminolevulinate: step 4/4. In terms of biological role, catalyzes the decarboxylation of four acetate groups of uroporphyrinogen-III to yield coproporphyrinogen-III. The polypeptide is Uroporphyrinogen decarboxylase (Shewanella baltica (strain OS185)).